The following is a 364-amino-acid chain: Spermidine/putrescine import ATP-binding protein PotA (364 aa).

An ABC transporter domain is found at 10–244 (IEVVNVSKIF…PAERFVADFI (235 aa)). 46–53 (GPSGCGKT) is a binding site for ATP.

Belongs to the ABC transporter superfamily. Spermidine/putrescine importer (TC 3.A.1.11.1) family. As to quaternary structure, the complex is composed of two ATP-binding proteins (PotA), two transmembrane proteins (PotB and PotC) and a solute-binding protein (PotD).

Its subcellular location is the cell inner membrane. It catalyses the reaction ATP + H2O + polyamine-[polyamine-binding protein]Side 1 = ADP + phosphate + polyamineSide 2 + [polyamine-binding protein]Side 1.. Its function is as follows. Part of the ABC transporter complex PotABCD involved in spermidine/putrescine import. Responsible for energy coupling to the transport system. The polypeptide is Spermidine/putrescine import ATP-binding protein PotA (Mesorhizobium japonicum (strain LMG 29417 / CECT 9101 / MAFF 303099) (Mesorhizobium loti (strain MAFF 303099))).